A 116-amino-acid polypeptide reads, in one-letter code: Cysteine-rich venom protein Cau1 (116 aa).

The SCP domain occupies 4-42; that stretch reads SYAVVGHYTQIVWYKSDRIGCAAAYCPSSVYNYFYVCQY. Disulfide bonds link cysteine 24–cysteine 40, cysteine 62–cysteine 69, cysteine 65–cysteine 74, cysteine 87–cysteine 105, and cysteine 96–cysteine 109. Positions 78–111 constitute a ShKT domain; it reads CRVEDEFINCKDMAESRDCQDNYMMTNCAAFCSC.

Belongs to the CRISP family. Expressed by the venom gland.

It is found in the secreted. In terms of biological role, blocks contraction of smooth muscle elicited by high potassium-induced depolarization, but does not block caffeine-stimulated contraction. May target voltage-gated calcium channels on smooth muscle. The chain is Cysteine-rich venom protein Cau1 from Causus rhombeatus (Rhombic night adder).